An 860-amino-acid polypeptide reads, in one-letter code: LPS-assembly protein LptD (860 aa).

An N-terminal signal peptide occupies residues 1 to 21 (MTKRYFSLLAVCSAIATSTFA).

Belongs to the LptD family. Component of the lipopolysaccharide transport and assembly complex. Interacts with LptE and LptA.

The protein resides in the cell outer membrane. Its function is as follows. Together with LptE, is involved in the assembly of lipopolysaccharide (LPS) at the surface of the outer membrane. This chain is LPS-assembly protein LptD, found in Saccharophagus degradans (strain 2-40 / ATCC 43961 / DSM 17024).